The following is a 132-amino-acid chain: Small ribosomal subunit protein uS8 (132 aa).

Belongs to the universal ribosomal protein uS8 family. In terms of assembly, part of the 30S ribosomal subunit. Contacts proteins S5 and S12.

Its function is as follows. One of the primary rRNA binding proteins, it binds directly to 16S rRNA central domain where it helps coordinate assembly of the platform of the 30S subunit. The sequence is that of Small ribosomal subunit protein uS8 from Francisella tularensis subsp. holarctica (strain FTNF002-00 / FTA).